The chain runs to 480 residues: Zinc metalloproteinase/disintegrin (480 aa).

Positions Met1–Ser20 are cleaved as a signal peptide. Residues Ile21–Asp190 constitute a propeptide that is removed on maturation. The Peptidase M12B domain maps to Arg197–Pro391. N-linked (GlcNAc...) asparagine glycosylation is found at Asn259 and Asn279. Disulfide bonds link Cys308–Cys386, Cys348–Cys370, Cys350–Cys353, Cys413–Cys428, Cys415–Cys423, Cys422–Cys445, Cys436–Cys442, Cys441–Cys466, and Cys454–Cys473. His333 lines the Zn(2+) pocket. The active site involves Glu334. Zn(2+) contacts are provided by His337 and His343. A Disintegrin domain is found at Thr399–Ala480. The Cell attachment site motif lies at Arg458–Asp460.

It belongs to the venom metalloproteinase (M12B) family. P-II subfamily. P-IIa sub-subfamily. As to quaternary structure, monomer. Requires Zn(2+) as cofactor. Expressed by the venom gland.

The protein resides in the secreted. Functionally, impairs hemostasis in the envenomed animal. Its function is as follows. Inhibits platelet aggregation and bone resorption. This Gloydius halys (Chinese water mocassin) protein is Zinc metalloproteinase/disintegrin.